Reading from the N-terminus, the 151-residue chain is Ribosome maturation factor RimP (151 aa).

It belongs to the RimP family.

Its subcellular location is the cytoplasm. Its function is as follows. Required for maturation of 30S ribosomal subunits. The chain is Ribosome maturation factor RimP from Pseudoalteromonas translucida (strain TAC 125).